The sequence spans 154 residues: Myoglobin (154 aa).

The Globin domain occupies 2 to 148; it reads GLSDQEWQQV…FRNDMASKYK (147 aa). Residue histidine 65 participates in nitrite binding. Histidine 65 is an O2 binding site. Histidine 94 is a binding site for heme b.

Belongs to the globin family. Monomeric.

It localises to the cytoplasm. The protein localises to the sarcoplasm. It catalyses the reaction Fe(III)-heme b-[protein] + nitric oxide + H2O = Fe(II)-heme b-[protein] + nitrite + 2 H(+). It carries out the reaction H2O2 + AH2 = A + 2 H2O. Its function is as follows. Monomeric heme protein which primary function is to store oxygen and facilitate its diffusion within muscle tissues. Reversibly binds oxygen through a pentacoordinated heme iron and enables its timely and efficient release as needed during periods of heightened demand. Depending on the oxidative conditions of tissues and cells, and in addition to its ability to bind oxygen, it also has a nitrite reductase activity whereby it regulates the production of bioactive nitric oxide. Under stress conditions, like hypoxia and anoxia, it also protects cells against reactive oxygen species thanks to its pseudoperoxidase activity. In Anas poecilorhyncha (Indian spot-billed duck), this protein is Myoglobin (MB).